Here is a 414-residue protein sequence, read N- to C-terminus: Multifunctional CCA protein (414 aa).

Residues Gly-8 and Arg-11 each coordinate ATP. Positions 8 and 11 each coordinate CTP. The Mg(2+) site is built by Asp-21 and Asp-23. ATP contacts are provided by Arg-91, Arg-137, and Arg-140. CTP-binding residues include Arg-91, Arg-137, and Arg-140. Residues 228 to 329 form the HD domain; sequence TGIHTLMVLE…VKLFDKGDFW (102 aa).

Belongs to the tRNA nucleotidyltransferase/poly(A) polymerase family. Bacterial CCA-adding enzyme type 1 subfamily. In terms of assembly, monomer. Can also form homodimers and oligomers. Requires Mg(2+) as cofactor. It depends on Ni(2+) as a cofactor.

It carries out the reaction a tRNA precursor + 2 CTP + ATP = a tRNA with a 3' CCA end + 3 diphosphate. The enzyme catalyses a tRNA with a 3' CCA end + 2 CTP + ATP = a tRNA with a 3' CCACCA end + 3 diphosphate. In terms of biological role, catalyzes the addition and repair of the essential 3'-terminal CCA sequence in tRNAs without using a nucleic acid template. Adds these three nucleotides in the order of C, C, and A to the tRNA nucleotide-73, using CTP and ATP as substrates and producing inorganic pyrophosphate. tRNA 3'-terminal CCA addition is required both for tRNA processing and repair. Also involved in tRNA surveillance by mediating tandem CCA addition to generate a CCACCA at the 3' terminus of unstable tRNAs. While stable tRNAs receive only 3'-terminal CCA, unstable tRNAs are marked with CCACCA and rapidly degraded. The polypeptide is Multifunctional CCA protein (Shewanella frigidimarina (strain NCIMB 400)).